Reading from the N-terminus, the 361-residue chain is NudC domain-containing protein 3 (361 aa).

Over residues 87–97 the composition is skewed to basic and acidic residues; sequence KIRRKEEEEAK. 2 disordered regions span residues 87 to 106 and 124 to 158; these read KIRR…AAEK and LDGH…VAGA. Phosphoserine is present on Ser146. Positions 148-158 are enriched in low complexity; sequence EAEAPGAVAGA. Residues 185 to 277 form the CS domain; it reads AVRENYTWSQ…VGEYWWNAIL (93 aa). A phosphoserine mark is found at Ser340 and Ser355.

This is NudC domain-containing protein 3 (NUDCD3) from Homo sapiens (Human).